The primary structure comprises 128 residues: Aspartate 1-decarboxylase (128 aa).

S25 (schiff-base intermediate with substrate; via pyruvic acid) is an active-site residue. S25 carries the pyruvic acid (Ser) modification. T57 provides a ligand contact to substrate. Residue Y58 is the Proton donor of the active site. 73–75 (GSA) lines the substrate pocket.

The protein belongs to the PanD family. In terms of assembly, heterooctamer of four alpha and four beta subunits. Pyruvate serves as cofactor. Is synthesized initially as an inactive proenzyme, which is activated by self-cleavage at a specific serine bond to produce a beta-subunit with a hydroxyl group at its C-terminus and an alpha-subunit with a pyruvoyl group at its N-terminus.

It is found in the cytoplasm. The catalysed reaction is L-aspartate + H(+) = beta-alanine + CO2. It participates in cofactor biosynthesis; (R)-pantothenate biosynthesis; beta-alanine from L-aspartate: step 1/1. Functionally, catalyzes the pyruvoyl-dependent decarboxylation of aspartate to produce beta-alanine. The polypeptide is Aspartate 1-decarboxylase (Burkholderia multivorans (strain ATCC 17616 / 249)).